A 290-amino-acid chain; its full sequence is L-fucono-1,5-lactonase (290 aa).

The protein belongs to the metallo-dependent hydrolases superfamily.

The enzyme catalyses L-fucono-1,5-lactone + H2O = L-fuconate + H(+). It catalyses the reaction L-fucono-1,4-lactone + H2O = L-fuconate + H(+). It carries out the reaction D-arabinono-1,4-lactone + H2O = D-arabinonate + H(+). The catalysed reaction is L-xylono-1,4-lactone + H2O = L-xylonate + H(+). The enzyme catalyses L-galactono-1,4-lactone + H2O = L-galactonate + H(+). Its function is as follows. Catalyzes the hydrolysis of L-fucono-1,5-lactone to L-fuconate. Can also hydrolyze L-fucono-1,4-lactone, L-galactono-1,4-lactone D-arabinono-1,4-lactone and L-xylono-1,4-lactone. This is L-fucono-1,5-lactonase from Burkholderia ambifaria (strain ATCC BAA-244 / DSM 16087 / CCUG 44356 / LMG 19182 / AMMD) (Burkholderia cepacia (strain AMMD)).